The primary structure comprises 69 residues: Brevinin-1Pb (69 aa).

The signal sequence occupies residues Met-1–Ser-20. The propeptide occupies Phe-21–Glu-43. Cys-63 and Cys-69 form a disulfide bridge.

As to expression, expressed by the skin glands.

The protein resides in the secreted. Antibacterial activity against Gram-positive bacterium S.aureus and Gram-negative bacterium E.coli. Has activity against C.albicans. In Lithobates pipiens (Northern leopard frog), this protein is Brevinin-1Pb.